We begin with the raw amino-acid sequence, 224 residues long: Orotate phosphoribosyltransferase (224 aa).

5-phospho-alpha-D-ribose 1-diphosphate contacts are provided by residues lysine 26, 73 to 74 (YK), arginine 100, lysine 101, lysine 104, histidine 106, and 127 to 135 (EDVTTSGKS). Orotate contacts are provided by threonine 131 and arginine 160.

It belongs to the purine/pyrimidine phosphoribosyltransferase family. PyrE subfamily. Homodimer. It depends on Mg(2+) as a cofactor.

It carries out the reaction orotidine 5'-phosphate + diphosphate = orotate + 5-phospho-alpha-D-ribose 1-diphosphate. It participates in pyrimidine metabolism; UMP biosynthesis via de novo pathway; UMP from orotate: step 1/2. Its function is as follows. Catalyzes the transfer of a ribosyl phosphate group from 5-phosphoribose 1-diphosphate to orotate, leading to the formation of orotidine monophosphate (OMP). The sequence is that of Orotate phosphoribosyltransferase from Clostridium botulinum (strain Eklund 17B / Type B).